Reading from the N-terminus, the 2325-residue chain is Centriolin (2325 aa).

A disordered region spans residues 1–33 (MKKGSQQKIFSKAKIPSSSHSPIPSSMSNMRSR). Positions 16 to 33 (PSSSHSPIPSSMSNMRSR) are enriched in low complexity. 4 LRR repeats span residues 126 to 147 (KLEVLNLSYNLIGKIEKLDKLL), 148 to 169 (KLRELNLSYNKISKIEGIENMC), 170 to 191 (NLQKLNLAGNEIEHIPVWLGKK), and 194 to 215 (SLRVLNLKGNKISSLQDISKLK). One can recognise an LRRCT domain in the interval 228-266 (NPVVTLPHYLQFTIFHLRSLESLEGQPVTTQDRQEAFER). Coiled coils occupy residues 267–343 (FSLE…IELT) and 435–799 (LDTQ…LNHV). Ser-831 is modified (phosphoserine). Residues 851 to 1101 (LARSKWERDE…ARLQNVLDLT (251 aa)) are a coiled coil. The segment at 1150 to 1241 (PSSKVSSHSS…DQEEPPFVPP (92 aa)) is disordered. A compositionally biased stretch (acidic residues) spans 1224-1235 (SQEESELDDQEE). Residues 1317 to 2255 (EHHNLENEVS…DRLKAQLRHC (939 aa)) adopt a coiled-coil conformation. Ser-1475 carries the post-translational modification Phosphoserine. The required for centrosome localization stretch occupies residues 1948–2118 (MMFQRLQKER…ELVAQDNHER (171 aa)). Residues 1985–2325 (QKSKLDQVLS…QNQEKNASAR (341 aa)) are sufficient for interaction with HOOK2. The segment at 2288-2325 (VTSTSADSASSPSLSQLESSLTEDSQLGQNQEKNASAR) is disordered. Residues 2290-2314 (STSADSASSPSLSQLESSLTEDSQL) show a composition bias toward low complexity. Positions 2315 to 2325 (GQNQEKNASAR) are enriched in polar residues.

Interacts with HOOK2. Interacts with EXOC6 and SNAPIN. Associates with the exocyst complex. In terms of tissue distribution, widely expressed with highest levels in testis and trachea.

It is found in the cytoplasm. It localises to the cytoskeleton. Its subcellular location is the microtubule organizing center. The protein localises to the centrosome. The protein resides in the midbody. It is found in the midbody ring. Its function is as follows. Involved in cell cycle progression and cytokinesis. During the late steps of cytokinesis, anchors exocyst and SNARE complexes at the midbody, thereby allowing secretory vesicle-mediated abscission. The chain is Centriolin (CNTRL) from Homo sapiens (Human).